The chain runs to 170 residues: Kunitz-type U1-aranetoxin-Av1a (170 aa).

Positions 1 to 19 are cleaved as a signal peptide; the sequence is MAKLLCTLFLAGFVFLANA. Positions 20-113 are excised as a propeptide; that stretch reads YSTDPPNPPD…WIPGWIPGLG (94 aa). Positions 117 to 167 constitute a BPTI/Kunitz inhibitor domain; sequence CLLPKVTGPCKASLTRYYYDKDTKACVEFIYGGCRGNRNNFKQKDECEKAC. Disulfide bonds link Cys-117–Cys-167, Cys-126–Cys-150, and Cys-142–Cys-163.

It belongs to the venom Kunitz-type family. 02 (native) subfamily. Post-translationally, O-glycosylated. In terms of tissue distribution, only expressed in epidermis.

The protein localises to the secreted. In terms of biological role, serine protease inhibitor with activity against plasmin (IC(50)=10.07 nM), trypsin (IC(50)=43.39 nM), chymotrypsin (IC(50)=109.25 nM) and neutrophil elastase (IC(50)=446.93 nM). The chain is Kunitz-type U1-aranetoxin-Av1a from Araneus ventricosus (Orbweaver spider).